The following is a 153-amino-acid chain: Ribosome maturation factor RimP (153 aa).

The protein belongs to the RimP family.

It is found in the cytoplasm. Required for maturation of 30S ribosomal subunits. This chain is Ribosome maturation factor RimP, found in Clostridium botulinum (strain ATCC 19397 / Type A).